A 364-amino-acid polypeptide reads, in one-letter code: Homeobox protein KNOX3 (364 aa).

The disordered stretch occupies residues 13–49 (TAHGQHHSQLPWGSSPLSAVISPPPQQQQQHQQQSAG). Positions 19–29 (HSQLPWGSSPL) are enriched in polar residues. Residues 246–266 (ELKHHLLKKYSGYLSSLKQEL) form the ELK domain. Residues 267–330 (SKKKKKGKLP…NQRKRHWKPT (64 aa)) constitute a DNA-binding region (homeobox; TALE-type).

It belongs to the TALE/KNOX homeobox family. In terms of assembly, binds DNA as a monomer. As to expression, the unit of inflorescence is the spikelet, which bears a fertile tract, the lemma, and the floret consisting of palea, two lodicules, three stamens and the pistil. The lemma is completed by the awn, an appendage homologous to the laminae of normal leaves. Expressed in the inflorescences and lemmas and at lower levels, in palea and vascular bundles.

The protein resides in the nucleus. In terms of biological role, may play a role in meristem formation and/or maintenance. Overexpression causes the hooded phenotype characterized by the appearance of an extra flower of inverse polarity on the lemma. Binds to the DNA sequence 5'-TGAC-3'. The protein is Homeobox protein KNOX3 (KNOX3) of Hordeum vulgare (Barley).